We begin with the raw amino-acid sequence, 142 residues long: Hemoglobin A subunit alpha-1 (142 aa).

One can recognise a Globin domain in the interval 2–142 (VLTAGDKANV…VATALTSKYR (141 aa)). H59 contacts O2. Residue H88 coordinates heme b.

Belongs to the globin family. As to quaternary structure, tetramer of alpha-1, alpha-2 and two identical beta chains. Red blood cells.

Functionally, involved in oxygen transport from the lung to the various peripheral tissues. In Aldabrachelys gigantea (Aldabra giant tortoise), this protein is Hemoglobin A subunit alpha-1.